Reading from the N-terminus, the 198-residue chain is Ribosomal RNA small subunit methyltransferase G (198 aa).

Residues Gly74, Phe79, 123–124 (IQ), and Arg136 contribute to the S-adenosyl-L-methionine site.

It belongs to the methyltransferase superfamily. RNA methyltransferase RsmG family.

It localises to the cytoplasm. It catalyses the reaction guanosine(527) in 16S rRNA + S-adenosyl-L-methionine = N(7)-methylguanosine(527) in 16S rRNA + S-adenosyl-L-homocysteine. In terms of biological role, specifically methylates the N7 position of guanine in position 527 of 16S rRNA. The chain is Ribosomal RNA small subunit methyltransferase G from Orientia tsutsugamushi (strain Ikeda) (Rickettsia tsutsugamushi).